The primary structure comprises 313 residues: PDZ domain-containing protein GIPC2 (313 aa).

Residues 14 to 27 (KETSRLVEGEHTDA) show a composition bias toward basic and acidic residues. The interval 14 to 34 (KETSRLVEGEHTDAAVRSLPS) is disordered. In terms of domain architecture, PDZ spans 117–197 (EVNVYKSEDS…EELFTLTLIE (81 aa)).

Belongs to the GIPC family. As to quaternary structure, probably interacts with SEMA5A.

The protein localises to the cytoplasm. The protein is PDZ domain-containing protein GIPC2 (GIPC2) of Bos taurus (Bovine).